The primary structure comprises 520 residues: Legumin A2 (520 aa).

Residues 1–22 form the signal peptide; the sequence is MATKLLALSLSFCFLLLGGCFA. 2 disulfides stabilise this stretch: cysteine 32–cysteine 65 and cysteine 108–cysteine 342. The region spanning 37-233 is the Cupin type-1 1 domain; it reads LNALEPDNRI…AFNVNRHIVD (197 aa). The segment at 250–339 is disordered; the sequence is VKGGLSIISP…RRQGDNGLEE (90 aa). The region spanning 348 to 497 is the Cupin type-1 2 domain; that stretch reads LNIGPSSSPD…TFNLQRNEAR (150 aa).

It belongs to the 11S seed storage protein (globulins) family. Hexamer; each subunit is composed of an acidic and a basic chain derived from a single precursor and linked by a disulfide bond.

Functionally, this protein found in the seeds of many leguminous and non-leguminous plants is the source of sulfur-containing amino acids in seed meals. This Pisum sativum (Garden pea) protein is Legumin A2 (LEGA2).